A 192-amino-acid chain; its full sequence is Putative molybdenum cofactor guanylyltransferase (192 aa).

Residues 8–10 (LAG), Lys-21, Asp-67, and Asp-101 each bind GTP. Asp-101 is a binding site for Mg(2+).

Belongs to the MobA family. As to quaternary structure, monomer. The cofactor is Mg(2+).

It localises to the cytoplasm. The enzyme catalyses Mo-molybdopterin + GTP + H(+) = Mo-molybdopterin guanine dinucleotide + diphosphate. Its function is as follows. Transfers a GMP moiety from GTP to Mo-molybdopterin (Mo-MPT) cofactor (Moco or molybdenum cofactor) to form Mo-molybdopterin guanine dinucleotide (Mo-MGD) cofactor. In Neisseria meningitidis serogroup B (strain ATCC BAA-335 / MC58), this protein is Putative molybdenum cofactor guanylyltransferase.